We begin with the raw amino-acid sequence, 54 residues long: UPF0391 membrane protein Mfla_0947/Mfla_1091 (54 aa).

2 consecutive transmembrane segments (helical) span residues 6 to 26 (VIFF…IAAG) and 30 to 50 (IAKI…VAGI).

The protein belongs to the UPF0391 family.

The protein localises to the cell membrane. This chain is UPF0391 membrane protein Mfla_0947/Mfla_1091, found in Methylobacillus flagellatus (strain ATCC 51484 / DSM 6875 / VKM B-1610 / KT).